The primary structure comprises 569 residues: AA9 family lytic polysaccharide monooxygenase A (569 aa).

The N-terminal stretch at 1-16 is a signal peptide; the sequence is MRIFSLALGFLPLVAG. Residues His-17 and His-99 each coordinate Cu(2+). A disulfide bond links Cys-59 and Cys-189. Asn-112 carries N-linked (GlcNAc...) asparagine glycosylation. 2 residues coordinate O2: His-174 and Gln-184. Tyr-186 serves as a coordination point for Cu(2+). Asn-244 and Asn-381 each carry an N-linked (GlcNAc...) asparagine glycan. Residues 399-424 show a composition bias toward low complexity; sequence AADATATATATTEDAEATTAAEAAAT. A disordered region spans residues 399–439; that stretch reads AADATATATATTEDAEATTAAEAAATSGAGRPGRGHGHGRG. Asn-472 carries an N-linked (GlcNAc...) asparagine glycan.

Belongs to the polysaccharide monooxygenase AA9 family. Requires Cu(2+) as cofactor.

The protein resides in the secreted. It catalyses the reaction [(1-&gt;4)-beta-D-glucosyl]n+m + reduced acceptor + O2 = 4-dehydro-beta-D-glucosyl-[(1-&gt;4)-beta-D-glucosyl]n-1 + [(1-&gt;4)-beta-D-glucosyl]m + acceptor + H2O.. Functionally, lytic polysaccharide monooxygenase (LPMO) that depolymerizes crystalline and amorphous polysaccharides via the oxidation of scissile alpha- or beta-(1-4)-glycosidic bonds, yielding C4 oxidation products. Catalysis by LPMOs requires the reduction of the active-site copper from Cu(II) to Cu(I) by a reducing agent and H(2)O(2) or O(2) as a cosubstrate. This Emericella nidulans (strain FGSC A4 / ATCC 38163 / CBS 112.46 / NRRL 194 / M139) (Aspergillus nidulans) protein is AA9 family lytic polysaccharide monooxygenase A.